The chain runs to 154 residues: Putative pre-16S rRNA nuclease (154 aa).

It belongs to the YqgF nuclease family.

The protein localises to the cytoplasm. In terms of biological role, could be a nuclease involved in processing of the 5'-end of pre-16S rRNA. This is Putative pre-16S rRNA nuclease from Ruegeria pomeroyi (strain ATCC 700808 / DSM 15171 / DSS-3) (Silicibacter pomeroyi).